The following is a 299-amino-acid chain: Taste receptor type 2 member 16 (299 aa).

Residues 1 to 5 (MVPTQ) are Extracellular-facing. Residues 6–26 (VTIFSIIMYVLESLVIIVQSC) traverse the membrane as a helical segment. At 27 to 44 (TTVAVLFREWMHFQRLSP) the chain is on the cytoplasmic side. A helical membrane pass occupies residues 45–65 (VEIILISLGISHFCLQWTSML). Residues 66–82 (YNFGTYSRPVLLFWKVS) are Extracellular-facing. Residues 83–103 (VVWEFMNVLTFWLTSLLAVLY) traverse the membrane as a helical segment. Over 104-125 (CVKVSSFSHPVFLWLRLKILKL) the chain is Cytoplasmic. A helical transmembrane segment spans residues 126 to 146 (VLWLLLGALIASCLSIIPSVV). Residues 147–183 (KYHIQMELLTLDHLPKNSSLILRLQMFEWYFSNPFKM) are Extracellular-facing. N-linked (GlcNAc...) asparagine glycosylation is present at Asn163. Residues 184–204 (IGFGVPFLVFLISIILLTVSL) form a helical membrane-spanning segment. The Cytoplasmic segment spans residues 205–233 (VQHWGQMKHYSSSSSSLRAQCTVLKSLAT). Residues 234–254 (FFIFFTSYFLTIVVSFIGTVF) traverse the membrane as a helical segment. At 255 to 258 (DKKS) the chain is on the extracellular side. The chain crosses the membrane as a helical span at residues 259-279 (WFWVCEAVIYGLVCIHFTSLM). Topologically, residues 280 to 299 (MSNPTLKKALRLQFWSPESS) are cytoplasmic.

It belongs to the G-protein coupled receptor T2R family. In terms of assembly, interacts with RTP3 and RTP4. In terms of tissue distribution, expressed in subsets of taste receptor cells of the tongue and palate epithelium and exclusively in gustducin-positive cells. Expressed in the antrum and fundus (part of the stomach), duodenum and in gastric endocrine cells.

The protein resides in the cell membrane. Functionally, gustducin-coupled receptor implicated in the perception of bitter compounds in the oral cavity and the gastrointestinal tract. Signals through PLCB2 and the calcium-regulated cation channel TRPM5. The chain is Taste receptor type 2 member 16 (Tas2r16) from Rattus norvegicus (Rat).